The primary structure comprises 268 residues: Ribosomal RNA small subunit methyltransferase A (268 aa).

S-adenosyl-L-methionine-binding residues include Asn-16, Leu-18, Gly-43, Glu-64, Asp-89, and Asn-110.

This sequence belongs to the class I-like SAM-binding methyltransferase superfamily. rRNA adenine N(6)-methyltransferase family. RsmA subfamily.

It is found in the cytoplasm. It carries out the reaction adenosine(1518)/adenosine(1519) in 16S rRNA + 4 S-adenosyl-L-methionine = N(6)-dimethyladenosine(1518)/N(6)-dimethyladenosine(1519) in 16S rRNA + 4 S-adenosyl-L-homocysteine + 4 H(+). Its function is as follows. Specifically dimethylates two adjacent adenosines (A1518 and A1519) in the loop of a conserved hairpin near the 3'-end of 16S rRNA in the 30S particle. May play a critical role in biogenesis of 30S subunits. This Pseudomonas syringae pv. syringae (strain B728a) protein is Ribosomal RNA small subunit methyltransferase A.